We begin with the raw amino-acid sequence, 357 residues long: RNA-binding protein 4B (357 aa).

2 consecutive RRM domains span residues 2-72 (VKLF…ASKN) and 78-148 (TKLH…LSTS). Residues 160–177 (SGCYRCGKEGHWSKECPV) form a CCHC-type zinc finger. The segment at 196–357 (AVRTPYTMGY…YVDRTRYSAF (162 aa)) is interaction with TNPO3.

As to quaternary structure, interacts with TNPO3, which may mediate nuclear import of the protein. Expressed in the suprachiasmatic nucleus (SCN) (at protein level). Expressed in the suprachiasmatic nucleus (SCN).

It is found in the nucleus. The protein resides in the nucleolus. Its function is as follows. Required for the translational activation of PER1 mRNA in response to circadian clock. Binds directly to the 3'-UTR of the PER1 mRNA. The protein is RNA-binding protein 4B (Rbm4b) of Mus musculus (Mouse).